The chain runs to 239 residues: Endonuclease V (239 aa).

The Mg(2+) site is built by aspartate 50 and aspartate 118.

Belongs to the endonuclease V family. Mg(2+) serves as cofactor.

Its subcellular location is the cytoplasm. The catalysed reaction is Endonucleolytic cleavage at apurinic or apyrimidinic sites to products with a 5'-phosphate.. Functionally, DNA repair enzyme involved in the repair of deaminated bases. Selectively cleaves double-stranded DNA at the second phosphodiester bond 3' to a deoxyinosine leaving behind the intact lesion on the nicked DNA. The protein is Endonuclease V of Xylella fastidiosa (strain Temecula1 / ATCC 700964).